The sequence spans 716 residues: Phenylalanine/tyrosine ammonia-lyase (716 aa).

The active-site Proton donor/acceptor is the Tyr110. The 5-imidazolinone (Ala-Gly) cross-link spans 211–213 (ASG). Ser212 is modified (2,3-didehydroalanine (Ser)). (E)-cinnamate contacts are provided by Asn270, Gln360, Arg366, Asn397, Lys468, Glu496, and Asn499.

It belongs to the PAL/histidase family. As to quaternary structure, homotetramer. Dimer of dimers. In terms of processing, contains an active site 4-methylidene-imidazol-5-one (MIO), which is formed autocatalytically by cyclization and dehydration of residues Ala-Ser-Gly.

Its subcellular location is the cytoplasm. The catalysed reaction is L-phenylalanine = (E)-cinnamate + NH4(+). The enzyme catalyses L-tyrosine = (E)-4-coumarate + NH4(+). It functions in the pathway phenylpropanoid metabolism; trans-cinnamate biosynthesis; trans-cinnamate from L-phenylalanine: step 1/1. Catalyzes the non-oxidative deamination of L-phenylalanine and L-tyrosine to form trans-cinnamic acid and p-coumaric acid respectively with similar efficiencies. Facilitates the commitment step in phenylpropanoid pathways that produce secondary metabolites such as lignins, coumarins and flavonoids. This chain is Phenylalanine/tyrosine ammonia-lyase (PAL), found in Rhodotorula toruloides (Yeast).